The sequence spans 98 residues: C-X-C motif chemokine 10 (98 aa).

A signal peptide spans 1-21 (MNPSAAVIFCLILLGLSGTQG). Arg-26 carries the citrulline modification. Disulfide bonds link Cys-30–Cys-57 and Cys-32–Cys-74.

The protein belongs to the intercrine alpha (chemokine CxC) family. In terms of assembly, monomer, dimer, and tetramer. Interacts with CXCR3 (via N-terminus). In terms of tissue distribution, expressed in the spleen, thymus, lymph nodes and liver. Expressed in astrocytes, microglia, and neurons.

The protein localises to the secreted. Its function is as follows. Pro-inflammatory cytokine that is involved in a wide variety of processes such as chemotaxis, differentiation, and activation of peripheral immune cells, regulation of cell growth, apoptosis and modulation of angiostatic effects. Plays thereby an important role during viral infections by stimulating the activation and migration of immune cells to the infected sites. Mechanistically, binding of CXCL10 to the CXCR3 receptor activates G protein-mediated signaling and results in downstream activation of phospholipase C-dependent pathway, an increase in intracellular calcium production and actin reorganization. In turn, recruitment of activated Th1 lymphocytes occurs at sites of inflammation. Activation of the CXCL10/CXCR3 axis also plays an important role in neurons in response to brain injury for activating microglia, the resident macrophage population of the central nervous system, and directing them to the lesion site. This recruitment is an essential element for neuronal reorganization. In Mus musculus (Mouse), this protein is C-X-C motif chemokine 10 (Cxcl10).